The primary structure comprises 500 residues: Cytochrome P450 monooxygenase hepD (500 aa).

A helical membrane pass occupies residues 15–35; that stretch reads WILLSLSLAFIVVYSLFYLAV. N-linked (GlcNAc...) asparagine glycosylation is found at N99, N185, N373, and N409. Residue C445 participates in heme binding. N-linked (GlcNAc...) asparagine glycosylation occurs at N482.

Belongs to the cytochrome P450 family. Heme is required as a cofactor.

It localises to the membrane. The protein operates within secondary metabolite biosynthesis. Its function is as follows. Cytochrome P450 monooxygenase; part of the gene cluster that mediates the biosynthesis of heptelidic acid (HA), a sesquiterpene lactone that acts as an inhibitor of glyceraldehyde-3-phosphatedehydrogenase (GAPDH) and a growth inhibitor of the salt-tolerant lactic acid bacteria in soy sauce brewing. In Aspergillus oryzae (strain ATCC 42149 / RIB 40) (Yellow koji mold), this protein is Cytochrome P450 monooxygenase hepD.